The chain runs to 241 residues: DNA repair protein RecO (241 aa).

Belongs to the RecO family.

Functionally, involved in DNA repair and RecF pathway recombination. In Rickettsia bellii (strain OSU 85-389), this protein is DNA repair protein RecO.